We begin with the raw amino-acid sequence, 515 residues long: Protein FAM98A (515 aa).

2 disordered regions span residues 297–410 (VLMG…GYHG) and 432–515 (SGYQ…HYTS). Over residues 302–311 (VPDRGGRPNE) the composition is skewed to basic and acidic residues. Positions 382–394 (WTDGGSGSGGGYQ) are enriched in gly residues. Over residues 444–456 (RYQDGGHHGERGS) the composition is skewed to basic and acidic residues. The span at 457 to 481 (GRGGRGGRGGRGGRGSQGGGWGGRG) shows a compositional bias: gly residues. Positions 485–501 (YHQGGQFEQHFQHGGYQ) are enriched in low complexity. Polar residues predominate over residues 502 to 515 (YSHSGFGQGRHYTS).

Belongs to the FAM98 family. In terms of assembly, interacts (via N- and C-terminus) with DDX1. Interacts (via N- and C-terminus) with C14orf166. Interacts with FAM98B. Interacts with PLEKHM1 (via N- and C-terminus).

In terms of biological role, positively stimulates PRMT1-induced protein arginine methylation. Involved in skeletal homeostasis. Positively regulates lysosome peripheral distribution and ruffled border formation in osteoclasts. This is Protein FAM98A from Mus musculus (Mouse).